A 215-amino-acid chain; its full sequence is NAD(P)H-quinone oxidoreductase subunit I (215 aa).

4Fe-4S ferredoxin-type domains are found at residues 55–84 (GRIHYEFDKCIACEVCVRVCPINLPVVDWV) and 95–124 (RNYSIDFGVCIFCGNCVEYCPTNCLSMTEE). Positions 64, 67, 70, 74, 104, 107, 110, and 114 each coordinate [4Fe-4S] cluster. Residues 166–215 (AGEMDPHGVPNDRPRAGQLPSQVLETLAPPAKVGAKNEGQSTGTTQEGEA) are disordered. A compositionally biased stretch (basic and acidic residues) spans 169-180 (MDPHGVPNDRPR). A compositionally biased stretch (polar residues) spans 203 to 215 (EGQSTGTTQEGEA).

The protein belongs to the complex I 23 kDa subunit family. In terms of assembly, NDH-1 is composed of at least 11 different subunits. Requires [4Fe-4S] cluster as cofactor.

It localises to the cellular thylakoid membrane. It catalyses the reaction a plastoquinone + NADH + (n+1) H(+)(in) = a plastoquinol + NAD(+) + n H(+)(out). The catalysed reaction is a plastoquinone + NADPH + (n+1) H(+)(in) = a plastoquinol + NADP(+) + n H(+)(out). Functionally, NDH-1 shuttles electrons from an unknown electron donor, via FMN and iron-sulfur (Fe-S) centers, to quinones in the respiratory and/or the photosynthetic chain. The immediate electron acceptor for the enzyme in this species is believed to be plastoquinone. Couples the redox reaction to proton translocation, and thus conserves the redox energy in a proton gradient. In Parasynechococcus marenigrum (strain WH8102), this protein is NAD(P)H-quinone oxidoreductase subunit I.